The chain runs to 312 residues: Lipoyl synthase (312 aa).

The [4Fe-4S] cluster site is built by Cys-51, Cys-56, Cys-62, Cys-77, Cys-81, Cys-84, and Ser-290. Residues 63-280 (WSRKTATYLA…RTIGTSLGLF (218 aa)) form the Radical SAM core domain.

The protein belongs to the radical SAM superfamily. Lipoyl synthase family. [4Fe-4S] cluster serves as cofactor.

It is found in the cytoplasm. The catalysed reaction is [[Fe-S] cluster scaffold protein carrying a second [4Fe-4S](2+) cluster] + N(6)-octanoyl-L-lysyl-[protein] + 2 oxidized [2Fe-2S]-[ferredoxin] + 2 S-adenosyl-L-methionine + 4 H(+) = [[Fe-S] cluster scaffold protein] + N(6)-[(R)-dihydrolipoyl]-L-lysyl-[protein] + 4 Fe(3+) + 2 hydrogen sulfide + 2 5'-deoxyadenosine + 2 L-methionine + 2 reduced [2Fe-2S]-[ferredoxin]. The protein operates within protein modification; protein lipoylation via endogenous pathway; protein N(6)-(lipoyl)lysine from octanoyl-[acyl-carrier-protein]: step 2/2. Catalyzes the radical-mediated insertion of two sulfur atoms into the C-6 and C-8 positions of the octanoyl moiety bound to the lipoyl domains of lipoate-dependent enzymes, thereby converting the octanoylated domains into lipoylated derivatives. The polypeptide is Lipoyl synthase (Chlamydia caviae (strain ATCC VR-813 / DSM 19441 / 03DC25 / GPIC) (Chlamydophila caviae)).